Reading from the N-terminus, the 425-residue chain is Serine--tRNA ligase (425 aa).

Residue 232-234 participates in L-serine binding; that stretch reads TSE. Residues 263-265 and Val279 each bind ATP; that span reads RRE. An L-serine-binding site is contributed by Glu286. Residue 350 to 353 participates in ATP binding; it reads EVVS. Thr387 lines the L-serine pocket.

Belongs to the class-II aminoacyl-tRNA synthetase family. Type-1 seryl-tRNA synthetase subfamily. As to quaternary structure, homodimer. The tRNA molecule binds across the dimer.

It is found in the cytoplasm. It catalyses the reaction tRNA(Ser) + L-serine + ATP = L-seryl-tRNA(Ser) + AMP + diphosphate + H(+). The enzyme catalyses tRNA(Sec) + L-serine + ATP = L-seryl-tRNA(Sec) + AMP + diphosphate + H(+). It functions in the pathway aminoacyl-tRNA biosynthesis; selenocysteinyl-tRNA(Sec) biosynthesis; L-seryl-tRNA(Sec) from L-serine and tRNA(Sec): step 1/1. Functionally, catalyzes the attachment of serine to tRNA(Ser). Is also able to aminoacylate tRNA(Sec) with serine, to form the misacylated tRNA L-seryl-tRNA(Sec), which will be further converted into selenocysteinyl-tRNA(Sec). This Methanospirillum hungatei JF-1 (strain ATCC 27890 / DSM 864 / NBRC 100397 / JF-1) protein is Serine--tRNA ligase.